The primary structure comprises 483 residues: 3-isopropylmalate dehydratase large subunit (483 aa).

The [4Fe-4S] cluster site is built by cysteine 352, cysteine 412, and cysteine 415.

This sequence belongs to the aconitase/IPM isomerase family. LeuC type 1 subfamily. In terms of assembly, heterodimer of LeuC and LeuD. Requires [4Fe-4S] cluster as cofactor.

It catalyses the reaction (2R,3S)-3-isopropylmalate = (2S)-2-isopropylmalate. It participates in amino-acid biosynthesis; L-leucine biosynthesis; L-leucine from 3-methyl-2-oxobutanoate: step 2/4. Its function is as follows. Catalyzes the isomerization between 2-isopropylmalate and 3-isopropylmalate, via the formation of 2-isopropylmaleate. The polypeptide is 3-isopropylmalate dehydratase large subunit (Paenarthrobacter aurescens (strain TC1)).